The sequence spans 474 residues: Aspartyl/glutamyl-tRNA(Asn/Gln) amidotransferase subunit B (474 aa).

Belongs to the GatB/GatE family. GatB subfamily. Heterotrimer of A, B and C subunits.

It catalyses the reaction L-glutamyl-tRNA(Gln) + L-glutamine + ATP + H2O = L-glutaminyl-tRNA(Gln) + L-glutamate + ADP + phosphate + H(+). The enzyme catalyses L-aspartyl-tRNA(Asn) + L-glutamine + ATP + H2O = L-asparaginyl-tRNA(Asn) + L-glutamate + ADP + phosphate + 2 H(+). Its function is as follows. Allows the formation of correctly charged Asn-tRNA(Asn) or Gln-tRNA(Gln) through the transamidation of misacylated Asp-tRNA(Asn) or Glu-tRNA(Gln) in organisms which lack either or both of asparaginyl-tRNA or glutaminyl-tRNA synthetases. The reaction takes place in the presence of glutamine and ATP through an activated phospho-Asp-tRNA(Asn) or phospho-Glu-tRNA(Gln). The chain is Aspartyl/glutamyl-tRNA(Asn/Gln) amidotransferase subunit B from Lactiplantibacillus plantarum (strain ATCC BAA-793 / NCIMB 8826 / WCFS1) (Lactobacillus plantarum).